A 206-amino-acid polypeptide reads, in one-letter code: Ras-related protein RABH1a (206 aa).

14–21 (GDQGVGKT) contributes to the GTP binding site. The Effector region motif lies at 36-44 (YQATIGIDF). Residues 62–66 (DTAGQ), 120–123 (NKTD), and 150–151 (SA) contribute to the GTP site. Residues cysteine 204 and cysteine 206 are each lipidated (S-geranylgeranyl cysteine). A Cysteine methyl ester modification is found at cysteine 206.

It belongs to the small GTPase superfamily. Rab family.

It localises to the golgi apparatus membrane. Protein transport. Regulator of membrane traffic from the Golgi apparatus towards the endoplasmic reticulum (ER). The sequence is that of Ras-related protein RABH1a (RABH1A) from Arabidopsis thaliana (Mouse-ear cress).